Here is a 265-residue protein sequence, read N- to C-terminus: Mlc titration factor A (265 aa).

4 residues coordinate Zn(2+): histidine 111, histidine 148, histidine 152, and glutamate 211.

The protein belongs to the MtfA family. As to quaternary structure, interacts with Mlc. The cofactor is Zn(2+).

It is found in the cytoplasm. Functionally, involved in the modulation of the activity of the glucose-phosphotransferase system (glucose-PTS). Interacts with the transcriptional repressor Mlc, preventing its interaction with DNA and leading to the modulation of expression of genes regulated by Mlc, including ptsG, which encodes the PTS system glucose-specific EIICB component. Its function is as follows. Shows zinc-dependent metallopeptidase activity. The protein is Mlc titration factor A of Escherichia fergusonii (strain ATCC 35469 / DSM 13698 / CCUG 18766 / IAM 14443 / JCM 21226 / LMG 7866 / NBRC 102419 / NCTC 12128 / CDC 0568-73).